A 404-amino-acid polypeptide reads, in one-letter code: Adenylosuccinate synthetase (404 aa).

GTP is bound by residues 12 to 18 (GDEGKGK) and 40 to 42 (GHT). The active-site Proton acceptor is D13. Residues D13 and G40 each coordinate Mg(2+). IMP-binding positions include 13–16 (DEGK), 38–41 (NAGH), T121, R135, Q213, T228, and R296. H41 (proton donor) is an active-site residue. Substrate is bound at residue 292–298 (TTTGRAR). GTP contacts are provided by residues R298, 324 to 326 (KMD), and 389 to 391 (SCG).

It belongs to the adenylosuccinate synthetase family. In terms of assembly, homodimer. Requires Mg(2+) as cofactor.

It localises to the cytoplasm. The enzyme catalyses IMP + L-aspartate + GTP = N(6)-(1,2-dicarboxyethyl)-AMP + GDP + phosphate + 2 H(+). It functions in the pathway purine metabolism; AMP biosynthesis via de novo pathway; AMP from IMP: step 1/2. Its function is as follows. Plays an important role in the de novo pathway of purine nucleotide biosynthesis. Catalyzes the first committed step in the biosynthesis of AMP from IMP. This chain is Adenylosuccinate synthetase, found in Deinococcus geothermalis (strain DSM 11300 / CIP 105573 / AG-3a).